Here is a 157-residue protein sequence, read N- to C-terminus: uncharacterized protein (157 aa).

4 helical membrane-spanning segments follow: residues 3–23 (IFSF…MFIS), 24–44 (AFLS…ALAV), 47–67 (LMLG…ATAG), and 105–125 (IALL…IAGW).

To E.coli YqaA.

The protein localises to the cell membrane. This is an uncharacterized protein from Haemophilus influenzae (strain ATCC 51907 / DSM 11121 / KW20 / Rd).